The chain runs to 725 residues: Kinesin-like protein KIN-8A (725 aa).

The segment at 1 to 32 (MPVSTRSKVMKQERNEQENTNLNLPLRNPHQG) is disordered. The 331-residue stretch at 151–481 (RILVFVRLRP…LHWADRAKEI (331 aa)) folds into the Kinesin motor domain. Residue 243–250 (GATGAGKT) participates in ATP binding. Coiled-coil stretches lie at residues 499 to 541 (EGAD…AANN) and 583 to 617 (ESLKRTKAEEAVKELQLTVKALKMEMERMKREHGL). 2 disordered regions span residues 652 to 672 (GSLRPKEKEKELKSPSHRFAS) and 691 to 725 (SPALDRRKTRSHGLVHQEAPSKLLQPGFARPHMKH). Over residues 655 to 665 (RPKEKEKELKS) the composition is skewed to basic and acidic residues.

It belongs to the TRAFAC class myosin-kinesin ATPase superfamily. Kinesin family. KIN-8 subfamily.

This Arabidopsis thaliana (Mouse-ear cress) protein is Kinesin-like protein KIN-8A.